The following is a 658-amino-acid chain: UvrABC system protein B (658 aa).

Residues 26 to 413 form the Helicase ATP-binding domain; the sequence is EGINSGKKKQ…SPEVIEQIIR (388 aa). Residue 39-46 participates in ATP binding; the sequence is GATGTGKT. Residues 92-115 carry the Beta-hairpin motif; it reads YYDYYQPEAYVPQTDTFIEKDAQI. The region spanning 430–596 is the Helicase C-terminal domain; that stretch reads QIDDLLGEIQ…TIQKGVRDVI (167 aa). The UVR domain maps to 622 to 657; the sequence is EKTIAKMEAEMKEAAKALDFERAAELRDLLLELKAE.

The protein belongs to the UvrB family. As to quaternary structure, forms a heterotetramer with UvrA during the search for lesions. Interacts with UvrC in an incision complex.

It localises to the cytoplasm. In terms of biological role, the UvrABC repair system catalyzes the recognition and processing of DNA lesions. A damage recognition complex composed of 2 UvrA and 2 UvrB subunits scans DNA for abnormalities. Upon binding of the UvrA(2)B(2) complex to a putative damaged site, the DNA wraps around one UvrB monomer. DNA wrap is dependent on ATP binding by UvrB and probably causes local melting of the DNA helix, facilitating insertion of UvrB beta-hairpin between the DNA strands. Then UvrB probes one DNA strand for the presence of a lesion. If a lesion is found the UvrA subunits dissociate and the UvrB-DNA preincision complex is formed. This complex is subsequently bound by UvrC and the second UvrB is released. If no lesion is found, the DNA wraps around the other UvrB subunit that will check the other stand for damage. This Bacillus anthracis protein is UvrABC system protein B.